The following is a 641-amino-acid chain: Uromodulin (641 aa).

The N-terminal stretch at 1–24 (MGQPPLTWMLMVVVASWFITTAAT) is a signal peptide. Residue Asn-25 is glycosylated (N-linked (GlcNAc...) asparagine). The EGF-like 1 domain occupies 28-64 (EARWCSECHSNATCTEDEAVTTCTCQEGFTGDGLTCV). Intrachain disulfides connect Cys-32–Cys-41, Cys-35–Cys-50, Cys-52–Cys-63, Cys-69–Cys-83, Cys-77–Cys-92, Cys-94–Cys-106, Cys-112–Cys-126, Cys-120–Cys-135, Cys-137–Cys-148, Cys-150–Cys-161, Cys-155–Cys-170, Cys-174–Cys-267, Cys-195–Cys-282, Cys-217–Cys-255, Cys-223–Cys-287, Cys-248–Cys-256, Cys-297–Cys-306, Cys-300–Cys-315, Cys-317–Cys-347, Cys-335–Cys-425, and Cys-366–Cys-389. In terms of domain architecture, EGF-like 2; calcium-binding spans 65–107 (DLDECAIPGAHNCSANSSCVNTPGSFSCVCPEGFRLSPGLGCT). Residue Asn-76 is glycosylated (N-linked (GlcNAc...) asparagine). One can recognise an EGF-like 3; calcium-binding domain in the interval 108-149 (DVDECAEPGLSHCHALATCVNVVGNYLCVCPAGYRGDGWHCE). Positions 150–171 (CSPGSCGPGLDCVPEGDALVCA) are beta hairpin. Positions 172–291 (DPCQAHRTLD…CHLAYCTDPS (120 aa)) are D10C. Asn-232 is a glycosylation site (N-linked (GlcNAc...) asparagine). Asn-275 carries an N-linked (GlcNAc...) asparagine glycan. An EGF-like 4 domain is found at 292–323 (SVEGTCEECSIDEDCKSDNGRWHCQCKQDFNI). N-linked (GlcNAc...) asparagine glycosylation occurs at Asn-322. Positions 334–429 (ECGANDMKVS…KINFACSYPL (96 aa)) are ZP-N. A ZP domain is found at 334–589 (ECGANDMKVS…PTCSGTRFRS (256 aa)). The segment at 430-453 (DMKVSLKTSLQPVVSALNITVGGT) is flexible ZP-N/ZP-C linker; important for secretion and polymerization into filaments. A glycan (N-linked (GlcNAc...) asparagine) is linked at Asn-447. The tract at residues 454–464 (GMFTVRMALFQ) is internal hydrophobic patch (IHP). Positions 454–589 (GMFTVRMALF…PTCSGTRFRS (136 aa)) are ZP-C. 3 cysteine pairs are disulfide-bonded: Cys-506-Cys-566, Cys-527-Cys-582, and Cys-571-Cys-578. Residues 586–589 (RFRS) form an essential for cleavage by HPN region. Positions 598 to 606 (VLNLGPITR) are external hydrophobic patch (EHP); regulates polymerization into filaments. The GPI-anchor amidated serine moiety is linked to residue Ser-614. The propeptide at 615 to 641 (RAAFSSLGLLKVWLPLLLSATLTLTFQ) is removed in mature form.

Homodimer that then polymerizes into long filaments. The filaments can additionally assemble laterally to form a sheet. The filaments consist of a zigzag-shaped backbone with laterally protruding arms which interact with bacterial adhesin fimH. Two fimH molecules can bind to a single UMOD monomer. Post-translationally, N-glycosylated. Proteolytically cleaved at a conserved C-terminal proteolytic cleavage site to generate the secreted form found in urine. This cleavage is catalyzed by HPN.

The protein localises to the apical cell membrane. It is found in the basolateral cell membrane. The protein resides in the cell projection. It localises to the cilium membrane. Its subcellular location is the secreted. Its function is as follows. Functions in biogenesis and organization of the apical membrane of epithelial cells of the thick ascending limb of Henle's loop (TALH), where it promotes formation of complex filamentous gel-like structure that may play a role in the water barrier permeability. May serve as a receptor for binding and endocytosis of cytokines (IL-1, IL-2) and TNF. Facilitates neutrophil migration across renal epithelia. Functionally, in the urine, may contribute to colloid osmotic pressure, retards passage of positively charged electrolytes, and inhibits formation of liquid containing supersaturated salts and subsequent formation of salt crystals. Protects against urinary tract infections by binding to type 1 fimbriated E.coli. Binds to bacterial adhesin fimH which mediates the stable formation of bacterial aggregates, prevents the binding of E.coli to uroplakins UPK1A and UPK1B which act as urothelial receptors for type I fimbriae, and allows for pathogen clearance through micturation. Also promotes aggregation of other bacteria including K.pneumoniae, P.aeruginosa and S.mitis and so may also protect against other uropathogens. The protein is Uromodulin (UMOD) of Pongo abelii (Sumatran orangutan).